Consider the following 396-residue polypeptide: Probable intron-encoded endonuclease aI3 (396 aa).

Residues 51-90 (TNNTNNNNPADSSSYESRMRAAGNSNSNSNSNSDSNINNT) are disordered. Over residues 74–90 (NSNSNSNSNSDSNINNT) the composition is skewed to low complexity.

Belongs to the LAGLIDADG endonuclease family.

It localises to the mitochondrion. In terms of biological role, mitochondrial DNA endonuclease involved in intron homing. In Kluyveromyces lactis (strain ATCC 8585 / CBS 2359 / DSM 70799 / NBRC 1267 / NRRL Y-1140 / WM37) (Yeast), this protein is Probable intron-encoded endonuclease aI3 (aI3).